The primary structure comprises 175 residues: Peptide deformylase (175 aa).

The Fe cation site is built by Cys-98 and His-140. Glu-141 is a catalytic residue. Fe cation is bound at residue His-144.

The protein belongs to the polypeptide deformylase family. Fe(2+) is required as a cofactor.

The enzyme catalyses N-terminal N-formyl-L-methionyl-[peptide] + H2O = N-terminal L-methionyl-[peptide] + formate. Functionally, removes the formyl group from the N-terminal Met of newly synthesized proteins. Requires at least a dipeptide for an efficient rate of reaction. N-terminal L-methionine is a prerequisite for activity but the enzyme has broad specificity at other positions. This Bradyrhizobium sp. (strain BTAi1 / ATCC BAA-1182) protein is Peptide deformylase.